The chain runs to 384 residues: Galactokinase (384 aa).

34–37 (EHTD) is a substrate binding site. Residue 123–129 (SSGLSSS) coordinates ATP. Mg(2+)-binding residues include Ser-129 and Glu-161. Asp-173 functions as the Proton acceptor in the catalytic mechanism. Position 222 (Tyr-222) interacts with substrate.

It belongs to the GHMP kinase family. GalK subfamily.

The protein localises to the cytoplasm. It catalyses the reaction alpha-D-galactose + ATP = alpha-D-galactose 1-phosphate + ADP + H(+). The protein operates within carbohydrate metabolism; galactose metabolism. Functionally, catalyzes the transfer of the gamma-phosphate of ATP to D-galactose to form alpha-D-galactose-1-phosphate (Gal-1-P). The protein is Galactokinase of Haemophilus influenzae (strain PittGG).